Here is a 1103-residue protein sequence, read N- to C-terminus: Trophozoite exported protein 1 (1103 aa).

Residues 173-212 (KKEKIEDKKYEQDDEEENEEEEEEEEEEEGEEENKEDEEF) adopt a coiled-coil conformation. Disordered stretches follow at residues 178–210 (EDKK…KEDE) and 271–301 (KSYS…DNGK). A compositionally biased stretch (acidic residues) spans 184–210 (QDDEEENEEEEEEEEEEEGEEENKEDE). The segment covering 271 to 280 (KSYSGDEKIN) has biased composition (basic and acidic residues). 2 coiled-coil regions span residues 304-330 (DYVK…LECN) and 478-518 (YKNY…KLNN). The interval 544 to 601 (YFDEGENPYNRNNKNYRTDNKNSDDNNNNNNYYYNNYNSDDNYNSEDNEYNNGNYRFR) is disordered. Positions 568 to 585 (DNNNNNNYYYNNYNSDDN) are enriched in low complexity. Coiled-coil stretches lie at residues 650–791 (FRNL…LSGI), 819–932 (DEKY…IYKK), and 993–1030 (NKKL…NLSK). An RING-type zinc finger spans residues 1050-1089 (CSVCMENFRNYIIIKCGHIYCNNCIFNNLKTRNRKCPQCK).

Its subcellular location is the host cell membrane. The chain is Trophozoite exported protein 1 from Plasmodium falciparum (isolate 3D7).